The sequence spans 434 residues: GTPase Obg (434 aa).

Residues 1-159 enclose the Obg domain; it reads MQFIDRCQIK…KTVRLELKYL (159 aa). One can recognise an OBG-type G domain in the interval 160–329; sequence ANVGIVGYPN…LVDRVFDLYQ (170 aa). GTP contacts are provided by residues 166–173, 191–195, 212–215, 282–285, and 310–312; these read GYPNAGKS, FTTLV, DIPG, NKMD, and ISA. 2 residues coordinate Mg(2+): Ser173 and Thr193. The region spanning 356 to 434 is the OCT domain; that stretch reads EKTIDDDPLD…ICDYEYLIDE (79 aa).

This sequence belongs to the TRAFAC class OBG-HflX-like GTPase superfamily. OBG GTPase family. In terms of assembly, monomer. Mg(2+) is required as a cofactor.

The protein localises to the cytoplasm. Functionally, an essential GTPase which binds GTP, GDP and possibly (p)ppGpp with moderate affinity, with high nucleotide exchange rates and a fairly low GTP hydrolysis rate. Plays a role in control of the cell cycle, stress response, ribosome biogenesis and in those bacteria that undergo differentiation, in morphogenesis control. This chain is GTPase Obg, found in Mycoplasmoides gallisepticum (strain R(low / passage 15 / clone 2)) (Mycoplasma gallisepticum).